A 152-amino-acid chain; its full sequence is 3-hydroxyacyl-[acyl-carrier-protein] dehydratase FabZ (152 aa).

The active site involves H58.

Belongs to the thioester dehydratase family. FabZ subfamily.

Its subcellular location is the cytoplasm. It catalyses the reaction a (3R)-hydroxyacyl-[ACP] = a (2E)-enoyl-[ACP] + H2O. In terms of biological role, involved in unsaturated fatty acids biosynthesis. Catalyzes the dehydration of short chain beta-hydroxyacyl-ACPs and long chain saturated and unsaturated beta-hydroxyacyl-ACPs. In Prochlorococcus marinus (strain AS9601), this protein is 3-hydroxyacyl-[acyl-carrier-protein] dehydratase FabZ.